Reading from the N-terminus, the 386-residue chain is MLSHIYKKEMIDALRDRKTILLTILVPMIMMLGLVFFYESMLSDKGEQYTLAVGHSLPPALESKLNEIDEISVKTFAKPEEAVDEGKADAYLNVPKEFDSYVNSMTPFKVDVYGNSIDQGSSNAMQLVQSALDQYKNEIVQQRLTNKHIDQSVIQPFTIQQKEADEEKGTSAIMLSAILPMLILTSIVSGAMPIALDIMAGEKDRKSIEALLLTPVSRNKVLVGKWLAVSTFGVASGVFALVFLILSTVLFTENLKTAFQLGDHMWSVIGASALIIVLSALLISAMELFISIMSSSVKEAQSYMSLVVFLPVFPMFFIFSKAPNQFDLSYFLIPFLNLHALFKQLLFGMVDPATILSTSGTIAVLIAIFFLLARACFLKDKWVLPK.

Helical transmembrane passes span 19–39 (TILL…FFYE), 172–192 (AIML…SGAM), 226–246 (WLAV…FLIL), 273–293 (ALII…ISIM), 300–320 (AQSY…FIFS), and 353–373 (ATIL…FLLA).

As to quaternary structure, the complex is composed of NatA and NatB.

It localises to the cell membrane. The enzyme catalyses Na(+)(in) + ATP + H2O = Na(+)(out) + ADP + phosphate + H(+). In terms of biological role, part of an ABC transporter that catalyzes ATP-dependent electrogenic sodium extrusion. This is ABC transporter permease protein NatB from Bacillus subtilis (strain 168).